Reading from the N-terminus, the 305-residue chain is Dihydroorotate dehydrogenase B (NAD(+)), catalytic subunit (305 aa).

Residues serine 23 and 47–48 contribute to the FMN site; that span reads KG. Substrate is bound by residues lysine 47 and 71-75; that span reads NAIGL. Residues asparagine 101 and asparagine 129 each contribute to the FMN site. Asparagine 129 serves as a coordination point for substrate. Cysteine 132 (nucleophile) is an active-site residue. FMN is bound by residues lysine 167 and isoleucine 193. 194–195 contributes to the substrate binding site; it reads NT. FMN-binding positions include glycine 219, 245-246, and 267-268; these read GG and GT.

The protein belongs to the dihydroorotate dehydrogenase family. Type 1 subfamily. Heterotetramer of 2 PyrK and 2 PyrD type B subunits. FMN serves as cofactor.

The protein localises to the cytoplasm. It carries out the reaction (S)-dihydroorotate + NAD(+) = orotate + NADH + H(+). It functions in the pathway pyrimidine metabolism; UMP biosynthesis via de novo pathway; orotate from (S)-dihydroorotate (NAD(+) route): step 1/1. In terms of biological role, catalyzes the conversion of dihydroorotate to orotate with NAD(+) as electron acceptor. This Geotalea uraniireducens (strain Rf4) (Geobacter uraniireducens) protein is Dihydroorotate dehydrogenase B (NAD(+)), catalytic subunit (pyrD).